The sequence spans 237 residues: Ribonuclease 3 (237 aa).

The RNase III domain occupies 8-134; it reads RSALLEKLGV…VIGAVYLDAG (127 aa). Glu-47 contributes to the Mg(2+) binding site. Asp-51 is a catalytic residue. Asp-120 and Glu-123 together coordinate Mg(2+). Glu-123 is an active-site residue. A DRBM domain is found at 161–229; the sequence is DPKTSLQEAA…ALSAWTALTN (69 aa).

The protein belongs to the ribonuclease III family. As to quaternary structure, homodimer. The cofactor is Mg(2+).

The protein localises to the cytoplasm. It catalyses the reaction Endonucleolytic cleavage to 5'-phosphomonoester.. Digests double-stranded RNA. Involved in the processing of primary rRNA transcript to yield the immediate precursors to the large and small rRNAs (23S and 16S). Processes some mRNAs, and tRNAs when they are encoded in the rRNA operon. Processes pre-crRNA and tracrRNA of type II CRISPR loci if present in the organism. The polypeptide is Ribonuclease 3 (Leifsonia xyli subsp. xyli (strain CTCB07)).